We begin with the raw amino-acid sequence, 183 residues long: Segregation and condensation protein B (183 aa).

This sequence belongs to the ScpB family. As to quaternary structure, homodimer. Homodimerization may be required to stabilize the binding of ScpA to the Smc head domains. Component of a cohesin-like complex composed of ScpA, ScpB and the Smc homodimer, in which ScpA and ScpB bind to the head domain of Smc. The presence of the three proteins is required for the association of the complex with DNA.

It localises to the cytoplasm. Participates in chromosomal partition during cell division. May act via the formation of a condensin-like complex containing Smc and ScpA that pull DNA away from mid-cell into both cell halves. In Streptococcus pyogenes serotype M1, this protein is Segregation and condensation protein B.